Reading from the N-terminus, the 176-residue chain is 3-hydroxydecanoyl-[acyl-carrier-protein] dehydratase (176 aa).

Residue His70 is part of the active site.

Belongs to the thioester dehydratase family. FabA subfamily. In terms of assembly, homodimer.

The protein resides in the cytoplasm. It carries out the reaction a (3R)-hydroxyacyl-[ACP] = a (2E)-enoyl-[ACP] + H2O. It catalyses the reaction (3R)-hydroxydecanoyl-[ACP] = (2E)-decenoyl-[ACP] + H2O. The enzyme catalyses (2E)-decenoyl-[ACP] = (3Z)-decenoyl-[ACP]. It participates in lipid metabolism; fatty acid biosynthesis. Functionally, necessary for the introduction of cis unsaturation into fatty acids. Catalyzes the dehydration of (3R)-3-hydroxydecanoyl-ACP to E-(2)-decenoyl-ACP and then its isomerization to Z-(3)-decenoyl-ACP. Can catalyze the dehydratase reaction for beta-hydroxyacyl-ACPs with saturated chain lengths up to 16:0, being most active on intermediate chain length. This Alkalilimnicola ehrlichii (strain ATCC BAA-1101 / DSM 17681 / MLHE-1) protein is 3-hydroxydecanoyl-[acyl-carrier-protein] dehydratase.